The sequence spans 395 residues: Elongation factor Tu (395 aa).

Residues 10 to 205 (KPHVNIGTIG…CDTWIPLPPR (196 aa)) form the tr-type G domain. Residues 19-26 (GHVDHGKT) are G1. 19–26 (GHVDHGKT) contacts GTP. A Mg(2+)-binding site is contributed by T26. The G2 stretch occupies residues 60-64 (GITIN). The segment at 81-84 (DCPG) is G3. Residues 81-85 (DCPGH) and 136-139 (NKCD) each bind GTP. The segment at 136 to 139 (NKCD) is G4. Positions 174–176 (SAL) are G5.

Belongs to the TRAFAC class translation factor GTPase superfamily. Classic translation factor GTPase family. EF-Tu/EF-1A subfamily. In terms of assembly, monomer.

It is found in the cytoplasm. The enzyme catalyses GTP + H2O = GDP + phosphate + H(+). In terms of biological role, GTP hydrolase that promotes the GTP-dependent binding of aminoacyl-tRNA to the A-site of ribosomes during protein biosynthesis. In Parabacteroides distasonis (strain ATCC 8503 / DSM 20701 / CIP 104284 / JCM 5825 / NCTC 11152), this protein is Elongation factor Tu.